We begin with the raw amino-acid sequence, 104 residues long: Co-chaperonin GroES 3 (104 aa).

It belongs to the GroES chaperonin family. As to quaternary structure, heptamer of 7 subunits arranged in a ring. Interacts with the chaperonin GroEL.

Its subcellular location is the cytoplasm. Together with the chaperonin GroEL, plays an essential role in assisting protein folding. The GroEL-GroES system forms a nano-cage that allows encapsulation of the non-native substrate proteins and provides a physical environment optimized to promote and accelerate protein folding. GroES binds to the apical surface of the GroEL ring, thereby capping the opening of the GroEL channel. In Bradyrhizobium diazoefficiens (strain JCM 10833 / BCRC 13528 / IAM 13628 / NBRC 14792 / USDA 110), this protein is Co-chaperonin GroES 3.